Consider the following 525-residue polypeptide: Probable CoA ligase CCL9 (525 aa).

ATP-binding positions include 171 to 179, 311 to 316, Asp395, 407 to 410, and Lys501; these read TSGTTSRPK, EAYAMT, and LVGR. Residues 242–311 are SBD1; that stretch reads SASTFWSDMI…EESFGAPVLE (70 aa). The segment at 312–375 is SBD2; it reads AYAMTEAAHL…IRGPNVTKGY (64 aa).

Belongs to the ATP-dependent AMP-binding enzyme family.

It localises to the cytoplasm. The protein localises to the cytosol. This chain is Probable CoA ligase CCL9, found in Humulus lupulus (European hop).